The chain runs to 489 residues: Betaine aldehyde dehydrogenase (489 aa).

K(+)-binding residues include T26 and D93. An NAD(+)-binding site is contributed by 150–152; sequence GAW. K162 serves as the catalytic Charge relay system. 176 to 179 provides a ligand contact to NAD(+); the sequence is KPSE. V180 is a K(+) binding site. 229-232 contributes to the NAD(+) binding site; sequence GVET. L245 lines the K(+) pocket. E251 acts as the Proton acceptor in catalysis. NAD(+) contacts are provided by G253, C285, and E386. Residue C285 is the Nucleophile of the active site. Cysteine sulfenic acid (-SOH) is present on C285. K456 and G459 together coordinate K(+). The active-site Charge relay system is E463.

The protein belongs to the aldehyde dehydrogenase family. As to quaternary structure, dimer of dimers. K(+) is required as a cofactor.

It carries out the reaction betaine aldehyde + NAD(+) + H2O = glycine betaine + NADH + 2 H(+). It functions in the pathway amine and polyamine biosynthesis; betaine biosynthesis via choline pathway; betaine from betaine aldehyde: step 1/1. In terms of biological role, involved in the biosynthesis of the osmoprotectant glycine betaine. Catalyzes the irreversible oxidation of betaine aldehyde to the corresponding acid. The protein is Betaine aldehyde dehydrogenase of Burkholderia cenocepacia (strain ATCC BAA-245 / DSM 16553 / LMG 16656 / NCTC 13227 / J2315 / CF5610) (Burkholderia cepacia (strain J2315)).